The chain runs to 490 residues: Cytochrome P450 71A21 (490 aa).

A helical transmembrane segment spans residues 1-21; sequence MESMTMIILQSLIIFITILFF. Cys432 contacts heme.

This sequence belongs to the cytochrome P450 family. Heme serves as cofactor.

The protein resides in the membrane. The protein is Cytochrome P450 71A21 (CYP71A21) of Arabidopsis thaliana (Mouse-ear cress).